A 716-amino-acid chain; its full sequence is 1,4-alpha-glucan branching enzyme GlgB (716 aa).

Residue aspartate 399 is the Nucleophile of the active site. The active-site Proton donor is glutamate 452.

It belongs to the glycosyl hydrolase 13 family. GlgB subfamily. Monomer.

The catalysed reaction is Transfers a segment of a (1-&gt;4)-alpha-D-glucan chain to a primary hydroxy group in a similar glucan chain.. The protein operates within glycan biosynthesis; glycogen biosynthesis. Its function is as follows. Catalyzes the formation of the alpha-1,6-glucosidic linkages in glycogen by scission of a 1,4-alpha-linked oligosaccharide from growing alpha-1,4-glucan chains and the subsequent attachment of the oligosaccharide to the alpha-1,6 position. This chain is 1,4-alpha-glucan branching enzyme GlgB, found in Rhodopseudomonas palustris (strain HaA2).